The sequence spans 515 residues: RNA-binding region-containing protein 3 (515 aa).

A disordered region spans residues 1 to 26 (MAVPEPSMPLSRGGPGSASLSPPRGD). Position 21 is a phosphoserine (S21). One can recognise an RRM 1 domain in the interval 27-102 (RTLLVRHLPA…HTLVVEFAKE (76 aa)). Disordered regions lie at residues 107-133 (HSSC…EKKE), 215-254 (LHAP…EEDR), and 337-369 (ETEQ…PKPN). S108 is subject to Phosphoserine. Residues 115-133 (AEKKKRLDDTVENDKEKKE) show a composition bias toward basic and acidic residues. Pro residues predominate over residues 218–230 (PLPPTSPQPPEEP). A compositionally biased stretch (basic and acidic residues) spans 337–348 (ETEQNNEEKNSD). Phosphoserine is present on S349. Residues 419 to 502 (CRIYVKNLAR…KPMVVQFARS (84 aa)) enclose the RRM 2 domain.

Component of the U11/U12 snRNPs that are part of the U12-type spliceosome. Found in a complex with m(7)G-capped U12 snRNA. Interacts with PDCD7.

It is found in the nucleus. In terms of biological role, participates in pre-mRNA U12-dependent splicing, performed by the minor spliceosome which removes U12-type introns. U12-type introns comprises less than 1% of all non-coding sequences. Binds to the 3'-stem-loop of m(7)G-capped U12 snRNA. The protein is RNA-binding region-containing protein 3 (Rnpc3) of Rattus norvegicus (Rat).